We begin with the raw amino-acid sequence, 174 residues long: Superoxide dismutase [Cu-Zn] (174 aa).

The signal sequence occupies residues 1–20 (MMKSLFIASTMVLMAFPAFA). Residues His-68, His-70, and His-93 each coordinate Cu cation. Residues Cys-75 and Cys-170 are joined by a disulfide bond. Zn(2+) contacts are provided by His-93, His-102, His-110, and Asp-113. His-148 is a Cu cation binding site.

Belongs to the Cu-Zn superoxide dismutase family. Homodimer. Cu cation serves as cofactor. Requires Zn(2+) as cofactor.

Its subcellular location is the periplasm. It carries out the reaction 2 superoxide + 2 H(+) = H2O2 + O2. Destroys radicals which are normally produced within the cells and which are toxic to biological systems. The sequence is that of Superoxide dismutase [Cu-Zn] (sodC) from Brucella melitensis biotype 1 (strain ATCC 23456 / CCUG 17765 / NCTC 10094 / 16M).